A 285-amino-acid chain; its full sequence is Acetyl-coenzyme A carboxylase carboxyl transferase subunit beta (285 aa).

In terms of domain architecture, CoA carboxyltransferase N-terminal spans 33–285 (MWIKCSKCGK…TLGNILRMHS (253 aa)). Zn(2+) contacts are provided by Cys-37, Cys-40, Cys-56, and Cys-59. The C4-type zinc-finger motif lies at 37 to 59 (CSKCGKILYKSDVDDNFKVCPKC).

It belongs to the AccD/PCCB family. Acetyl-CoA carboxylase is a heterohexamer composed of biotin carboxyl carrier protein (AccB), biotin carboxylase (AccC) and two subunits each of ACCase subunit alpha (AccA) and ACCase subunit beta (AccD). It depends on Zn(2+) as a cofactor.

Its subcellular location is the cytoplasm. It catalyses the reaction N(6)-carboxybiotinyl-L-lysyl-[protein] + acetyl-CoA = N(6)-biotinyl-L-lysyl-[protein] + malonyl-CoA. It functions in the pathway lipid metabolism; malonyl-CoA biosynthesis; malonyl-CoA from acetyl-CoA: step 1/1. Component of the acetyl coenzyme A carboxylase (ACC) complex. Biotin carboxylase (BC) catalyzes the carboxylation of biotin on its carrier protein (BCCP) and then the CO(2) group is transferred by the transcarboxylase to acetyl-CoA to form malonyl-CoA. The chain is Acetyl-coenzyme A carboxylase carboxyl transferase subunit beta from Clostridium acetobutylicum (strain ATCC 824 / DSM 792 / JCM 1419 / IAM 19013 / LMG 5710 / NBRC 13948 / NRRL B-527 / VKM B-1787 / 2291 / W).